The primary structure comprises 302 residues: Acetylxylan esterase (302 aa).

A signal peptide spans 1–20; the sequence is MPSVKETLTLLLSQAFLATG. A propeptide spanning residues 21–31 is cleaved from the precursor; that stretch reads SPVDGETVVKR. Gln-32 carries the post-translational modification Pyrrolidone carboxylic acid. Residue Asn-94 is glycosylated (N-linked (GlcNAc...) asparagine). Ser-121 is a catalytic residue. Positions 236–273 are disordered; that stretch reads QLSSGGSQPPGGGPTSTSRPTSTRTGSSPGPTQTHWGQ. The tract at residues 244 to 266 is linker; the sequence is PPGGGPTSTSRPTSTRTGSSPGP. Low complexity predominate over residues 250–269; sequence TSTSRPTSTRTGSSPGPTQT. In terms of domain architecture, CBM1 spans 266–302; that stretch reads PTQTHWGQCGGQGWTGPTQCESGTTCQVISQWYSQCL. Intrachain disulfides connect Cys-274/Cys-291 and Cys-285/Cys-301.

The protein belongs to the cutinase family. Acetylxylan esterase subfamily. Monomer. Glycosylated.

It is found in the secreted. The catalysed reaction is Deacetylation of xylans and xylo-oligosaccharides.. Its pathway is glycan degradation; xylan degradation. Inhibited by phenylmethylsulfonyl flouride. Degrades acetylated xylans by cleaving acetyl side groups from the hetero-xylan backbone. The polypeptide is Acetylxylan esterase (axe1) (Hypocrea jecorina (Trichoderma reesei)).